We begin with the raw amino-acid sequence, 165 residues long: Small ribosomal subunit protein uS5 (165 aa).

Residues 10 to 73 (LKEKVVFINR…EDAKKHLVEV (64 aa)) enclose the S5 DRBM domain.

This sequence belongs to the universal ribosomal protein uS5 family. As to quaternary structure, part of the 30S ribosomal subunit. Contacts proteins S4 and S8.

With S4 and S12 plays an important role in translational accuracy. In terms of biological role, located at the back of the 30S subunit body where it stabilizes the conformation of the head with respect to the body. The chain is Small ribosomal subunit protein uS5 from Clostridium novyi (strain NT).